Consider the following 850-residue polypeptide: Ras GTPase-activating protein 2 (850 aa).

Over residues 1-24 the composition is skewed to low complexity; the sequence is MAAAAPAAAAASSEAPAASATAEP. The tract at residues 1-32 is disordered; that stretch reads MAAAAPAAAAASSEAPAASATAEPEAGDQDSR. The residue at position 2 (A2) is an N-acetylalanine. C2 domains lie at 20–138 and 149–289; these read ATAE…ETWF and VQGK…QAWY. The region spanning 372-589 is the Ras-GAP domain; the sequence is DKLVPFATAV…IAVKKFLDEI (218 aa). S555 carries the post-translational modification Phosphoserine. The PH domain maps to 604–706; that stretch reads VHLKEGEMYK…WIDVLCRVSR (103 aa). The Btk-type zinc-finger motif lies at 708-744; the sequence is NQNRLSFYHPSVYLNGNWLCCQETGENTLGCKPCTAG. Residues H716, C727, C728, and C738 each coordinate Zn(2+). The interval 825 to 850 is disordered; that stretch reads HEKYRKKRSSSAKYGSKENPIVGKAS.

Its subcellular location is the cytoplasm. It is found in the perinuclear region. Inhibitory regulator of the Ras-cyclic AMP pathway. Binds inositol tetrakisphosphate (IP4). The polypeptide is Ras GTPase-activating protein 2 (RASA2) (Homo sapiens (Human)).